Here is a 162-residue protein sequence, read N- to C-terminus: NADH-ubiquinone oxidoreductase subunit 8 (162 aa).

4Fe-4S ferredoxin-type domains lie at 54–83 and 93–122; these read RRYQ…IESE and TRYD…EGPN. [4Fe-4S] cluster is bound by residues Cys63, Cys66, Cys69, Cys73, Cys102, Cys105, Cys108, and Cys112.

The protein belongs to the complex I 23 kDa subunit family. [4Fe-4S] cluster serves as cofactor.

It localises to the mitochondrion. The enzyme catalyses a ubiquinone + NADH + 5 H(+)(in) = a ubiquinol + NAD(+) + 4 H(+)(out). Core subunit of the mitochondrial membrane respiratory chain NADH dehydrogenase (Complex I) that is believed to belong to the minimal assembly required for catalysis. Complex I functions in the transfer of electrons from NADH to the respiratory chain. The immediate electron acceptor for the enzyme is believed to be ubiquinone. May donate electrons to ubiquinone. The chain is NADH-ubiquinone oxidoreductase subunit 8 (NAD8) from Reclinomonas americana.